Consider the following 87-residue polypeptide: Large ribosomal subunit protein eL34 (87 aa).

Belongs to the eukaryotic ribosomal protein eL34 family.

The sequence is that of Large ribosomal subunit protein eL34 from Sulfurisphaera tokodaii (strain DSM 16993 / JCM 10545 / NBRC 100140 / 7) (Sulfolobus tokodaii).